Reading from the N-terminus, the 496-residue chain is Glutamyl-tRNA(Gln) amidotransferase subunit A, mitochondrial (496 aa).

Active-site charge relay system residues include Lys75 and Ser162. The Acyl-ester intermediate role is filled by Ser186.

This sequence belongs to the amidase family. GatA subfamily. Subunit of the heterotrimeric GatCAB amidotransferase (AdT) complex, composed of A, B and C subunits.

Its subcellular location is the mitochondrion. It catalyses the reaction L-glutamyl-tRNA(Gln) + L-glutamine + ATP + H2O = L-glutaminyl-tRNA(Gln) + L-glutamate + ADP + phosphate + H(+). Functionally, allows the formation of correctly charged Gln-tRNA(Gln) through the transamidation of misacylated Glu-tRNA(Gln) in the mitochondria. The reaction takes place in the presence of glutamine and ATP through an activated gamma-phospho-Glu-tRNA(Gln). The protein is Glutamyl-tRNA(Gln) amidotransferase subunit A, mitochondrial of Pediculus humanus subsp. corporis (Body louse).